Reading from the N-terminus, the 378-residue chain is Quinolinate synthase (378 aa).

2 residues coordinate iminosuccinate: H59 and S80. Residue C125 coordinates [4Fe-4S] cluster. Residues 151–153 (YAN) and S168 contribute to the iminosuccinate site. C212 serves as a coordination point for [4Fe-4S] cluster. Iminosuccinate-binding positions include 238–240 (HPE) and T255. Residue C309 coordinates [4Fe-4S] cluster.

This sequence belongs to the quinolinate synthase family. Type 1 subfamily. The cofactor is [4Fe-4S] cluster.

The protein localises to the cytoplasm. The enzyme catalyses iminosuccinate + dihydroxyacetone phosphate = quinolinate + phosphate + 2 H2O + H(+). The protein operates within cofactor biosynthesis; NAD(+) biosynthesis; quinolinate from iminoaspartate: step 1/1. In terms of biological role, catalyzes the condensation of iminoaspartate with dihydroxyacetone phosphate to form quinolinate. This Burkholderia pseudomallei (strain 1106a) protein is Quinolinate synthase.